The primary structure comprises 272 residues: Putative phosphatase BU028/BU029 (272 aa).

Asp-8 functions as the Nucleophile in the catalytic mechanism. Asp-8 serves as a coordination point for Mg(2+). Phosphate is bound at residue Leu-9. Asp-10 contributes to the Mg(2+) binding site. Phosphate is bound by residues 42-43 and Lys-191; that span reads SG. Asp-214 provides a ligand contact to Mg(2+). Residue Asn-217 coordinates phosphate.

Belongs to the HAD-like hydrolase superfamily. Cof family. Mg(2+) serves as cofactor.

In Buchnera aphidicola subsp. Acyrthosiphon pisum (strain APS) (Acyrthosiphon pisum symbiotic bacterium), this protein is Putative phosphatase BU028/BU029.